The following is a 213-amino-acid chain: Uridine kinase (213 aa).

Residue 15–22 (GASASGKS) coordinates ATP.

It belongs to the uridine kinase family.

The protein localises to the cytoplasm. It carries out the reaction uridine + ATP = UMP + ADP + H(+). It catalyses the reaction cytidine + ATP = CMP + ADP + H(+). Its pathway is pyrimidine metabolism; CTP biosynthesis via salvage pathway; CTP from cytidine: step 1/3. It participates in pyrimidine metabolism; UMP biosynthesis via salvage pathway; UMP from uridine: step 1/1. This Salmonella paratyphi A (strain ATCC 9150 / SARB42) protein is Uridine kinase.